Reading from the N-terminus, the 368-residue chain is Mitogen-activated protein kinase KSS1 (368 aa).

The Protein kinase domain occupies Tyr13–Leu313. Residues Ile19 to Val27 and Lys42 contribute to the ATP site. Asp143 acts as the Proton acceptor in catalysis. Thr183 is subject to Phosphothreonine. A TXY motif is present at residues Thr183–Tyr185. Residue Tyr185 is modified to Phosphotyrosine.

Belongs to the protein kinase superfamily. Ser/Thr protein kinase family. MAP kinase subfamily. HOG1 sub-subfamily. In the nucleus, KSS1 forms a complex with DIG1, DIG2 and STE12; in contrast to FUS3 the interaction of KSS1 with STE12 does not depend on DIG1 and DIG2. Phosphorylated KSS1 shows reduced interaction with STE12. During pheromone activation and phosphorylation, KSS1 forms a membrane-associated complex with the scaffold protein STE5, the MAPKK STE7, the MAPKKK STE11, and the G-protein beta subunit GBB/STE4; interacting directly with POF1, STE7 and STE5 proteins. It depends on Mg(2+) as a cofactor. Dually phosphorylated on Thr-183 and Tyr-185 by STE7 in response to pheromone or carbon/nitrogen limitation, which activates the enzyme. Activated FUS3 down-regulates KSS1 phosphorylation.

The protein resides in the nucleus. The protein localises to the cytoplasm. Its subcellular location is the periplasm. It catalyses the reaction L-seryl-[protein] + ATP = O-phospho-L-seryl-[protein] + ADP + H(+). It carries out the reaction L-threonyl-[protein] + ATP = O-phospho-L-threonyl-[protein] + ADP + H(+). Activated by tyrosine and threonine phosphorylation after pheromone treatment or carbon/nitrogen limitation. Its function is as follows. Together with closely related FUS3, KSS1 is the final kinase in the signal transduction cascade regulating activation/repression of the mating and filamentation pathways, induced by pheromone and nitrogen/carbon limitation, respectively. Phosphorylated KSS1 activates both pathways, whereas activated FUS3 activates the mating but suppresses the filamentation pathway. KSS1 activity is down-regulated by FUS3 during pheromone induction to prevent inappropriate activation of the filamentation pathway. During induction of filamentation, KSS1 activates the transcription factor STE12 resulting in its binding to and activation of filamentation specific genes. Non-activated KSS1 has a kinase-independent repressive effect on STE12 transcriptional activity, that is mediated by direct binding to STE12 and depends on the presence of DIG1 and DIG2, and that is required for the suppression of filamentation under normal growth conditions. SSN3/SRB10 contributes further to the suppression of filamentation under these conditions by reducing STE12 stability independent of KSS1. FUS3 can partially compensate for the lack of KSS1 but filamentation becomes constitutively induced at a low level in the absence of any signal. KSS1 phosphorylates STE7, STE5, FAR1, DIG1, DIG2, STE12, and SST2. The chain is Mitogen-activated protein kinase KSS1 (KSS1) from Saccharomyces cerevisiae (strain ATCC 204508 / S288c) (Baker's yeast).